The following is a 475-amino-acid chain: Lactate utilization protein B (475 aa).

4Fe-4S ferredoxin-type domains follow at residues Gly-304–Tyr-334 and Tyr-353–Leu-382. Residues Cys-313, Cys-316, Cys-319, Cys-323, Cys-366, Cys-369, and Cys-373 each coordinate [4Fe-4S] cluster.

It belongs to the LutB/YkgF family.

Is involved in L-lactate degradation and allows cells to grow with lactate as the sole carbon source. Has probably a role as an electron transporter during oxidation of L-lactate. This Geobacillus sp. (strain WCH70) protein is Lactate utilization protein B.